Here is a 295-residue protein sequence, read N- to C-terminus: MYSAIRSLPLDGGHVGGDYHGPLDGTNLPGDACLVLTTDPKPRLRWTTELHERFVDAVTQLGGPDKATPKTIMRTMGVKGLTLYHLKSHLQKFRLGRQAGKESTENSKDASCVGESQDTGSSSTSSMRMAQQEQNEGYQVTEALRAQMEVQRRLHDQLEVQRRLQLRIEAQGKYLQSILEKACKAFDEQAATFAGLEAAREELSELAIKVSNSSQGTSVPYFDATKMMMMPSLSELAVAIDNKNNITTNCSVESSLTSITHGSSISAASMKKRQRGDNLGVGYESGWIMPSSTIG.

Residues 38 to 98 (TDPKPRLRWT…HLQKFRLGRQ (61 aa)) form the HTH myb-type domain. Positions 69–94 (PKTIMRTMGVKGLTLYHLKSHLQKFR) form a DNA-binding region, H-T-H motif. Positions 96–138 (GRQAGKESTENSKDASCVGESQDTGSSSTSSMRMAQQEQNEGY) are disordered. Over residues 99–108 (AGKESTENSK) the composition is skewed to basic and acidic residues. Positions 127–138 (MRMAQQEQNEGY) are enriched in polar residues. A coiled-coil region spans residues 141 to 161 (TEALRAQMEVQRRLHDQLEVQ). Positions 154 to 159 (LHDQLE) match the LHEQLE motif.

It belongs to the MYB-CC family. Homo- and heterodimers. Interacts with PHL3, but not with PHR1.

The protein localises to the nucleus. Functionally, transcriptional activator. Acts redundantly with PHR1 as a key component of the central regulatory system controlling transcriptional responses to Pi starvation. Binds in a sequence-specific manner to phosphate starvation-regulated promoters. In Arabidopsis thaliana (Mouse-ear cress), this protein is Protein PHR1-LIKE 2.